Reading from the N-terminus, the 263-residue chain is ATP synthase subunit a (263 aa).

The next 6 membrane-spanning stretches (helical) occupy residues 26–46, 86–106, 130–150, 166–186, 195–215, and 229–249; these read VHLD…FFFS, VAPL…IDLI, DISA…FYTI, PFNH…TLLA, LFGN…MYMA, and LAWA…FMML.

Belongs to the ATPase A chain family. As to quaternary structure, F-type ATPases have 2 components, CF(1) - the catalytic core - and CF(0) - the membrane proton channel. CF(1) has five subunits: alpha(3), beta(3), gamma(1), delta(1), epsilon(1). CF(0) has three main subunits: a(1), b(2) and c(9-12). The alpha and beta chains form an alternating ring which encloses part of the gamma chain. CF(1) is attached to CF(0) by a central stalk formed by the gamma and epsilon chains, while a peripheral stalk is formed by the delta and b chains.

It is found in the cell inner membrane. Its function is as follows. Key component of the proton channel; it plays a direct role in the translocation of protons across the membrane. This Glaesserella parasuis serovar 5 (strain SH0165) (Haemophilus parasuis) protein is ATP synthase subunit a.